The primary structure comprises 501 residues: Solute carrier family 2, facilitated glucose transporter member 5 (501 aa).

Position 1 is an N-acetylmethionine (methionine 1). The Cytoplasmic portion of the chain corresponds to methionine 1–alanine 18. A helical membrane pass occupies residues leucine 19 to valine 39. Tyrosine 32 is a binding site for D-fructose. The Extracellular portion of the chain corresponds to asparagine 40–threonine 68. The N-linked (GlcNAc...) asparagine glycan is linked to asparagine 51. A helical membrane pass occupies residues leucine 69 to proline 91. Topologically, residues leucine 92–arginine 98 are cytoplasmic. The helical transmembrane segment at lysine 99 to serine 119 threads the bilayer. The Extracellular segment spans residues arginine 120–glutamate 126. The chain crosses the membrane as a helical span at residues leucine 127–tyrosine 149. Residues leucine 150–alanine 161 lie on the Cytoplasmic side of the membrane. Residues leucine 162–leucine 182 traverse the membrane as a helical segment. A D-fructose-binding site is contributed by glutamine 167. The Extracellular segment spans residues arginine 183–tryptophan 192. Residues proline 193–phenylalanine 213 traverse the membrane as a helical segment. Topologically, residues proline 214–glutamine 277 are cytoplasmic. The helical transmembrane segment at leucine 278 to tyrosine 298 threads the bilayer. Residues glutamine 288 and isoleucine 296–tyrosine 298 each bind D-fructose. The Extracellular segment spans residues tyrosine 299 to histidine 313. Residues valine 314–phenylalanine 334 form a helical membrane-spanning segment. The Cytoplasmic segment spans residues valine 335–arginine 342. A helical transmembrane segment spans residues leucine 343–leucine 363. Residues alanine 364 to tryptophan 371 lie on the Extracellular side of the membrane. Residues methionine 372–isoleucine 394 form a helical membrane-spanning segment. Histidine 387 contacts D-fructose. The Cytoplasmic portion of the chain corresponds to proline 395 to phenylalanine 412. A helical membrane pass occupies residues methionine 413–isoleucine 433. A D-fructose-binding site is contributed by histidine 419–tryptophan 420. The Extracellular segment spans residues glutamine 434 to proline 439. Residues tyrosine 440–valine 460 form a helical membrane-spanning segment. The Cytoplasmic segment spans residues proline 461–glutamine 501.

This sequence belongs to the major facilitator superfamily. Sugar transporter (TC 2.A.1.1) family. Glucose transporter subfamily.

It is found in the apical cell membrane. It localises to the cell membrane. The protein localises to the sarcolemma. It catalyses the reaction D-fructose(out) = D-fructose(in). In terms of biological role, functions as a fructose transporter that has only low activity with other monosaccharides. Can mediate the uptake of deoxyglucose, but with low efficiency. Essential for fructose uptake in the small intestine. Plays a role in the regulation of salt uptake and blood pressure in response to dietary fructose. Required for the development of high blood pressure in response to high dietary fructose intake. The polypeptide is Solute carrier family 2, facilitated glucose transporter member 5 (Pongo abelii (Sumatran orangutan)).